Reading from the N-terminus, the 715-residue chain is Polyribonucleotide nucleotidyltransferase (715 aa).

Asp498 and Asp504 together coordinate Mg(2+). One can recognise a KH domain in the interval 565–625 (PKVCMMQIKP…ETVKKTVAFI (61 aa)). One can recognise an S1 motif domain in the interval 635–706 (GTCYQASILR…DRGRIDFLLL (72 aa)).

Belongs to the polyribonucleotide nucleotidyltransferase family. Mg(2+) is required as a cofactor.

It localises to the cytoplasm. The enzyme catalyses RNA(n+1) + phosphate = RNA(n) + a ribonucleoside 5'-diphosphate. In terms of biological role, involved in mRNA degradation. Catalyzes the phosphorolysis of single-stranded polyribonucleotides processively in the 3'- to 5'-direction. In Onion yellows phytoplasma (strain OY-M), this protein is Polyribonucleotide nucleotidyltransferase.